A 524-amino-acid chain; its full sequence is Bifunctional purine biosynthesis protein PurH (524 aa).

The MGS-like domain maps to 1–144 (MTRRALVSVS…KNSAHVGVVV (144 aa)).

This sequence belongs to the PurH family.

It catalyses the reaction (6R)-10-formyltetrahydrofolate + 5-amino-1-(5-phospho-beta-D-ribosyl)imidazole-4-carboxamide = 5-formamido-1-(5-phospho-D-ribosyl)imidazole-4-carboxamide + (6S)-5,6,7,8-tetrahydrofolate. The enzyme catalyses IMP + H2O = 5-formamido-1-(5-phospho-D-ribosyl)imidazole-4-carboxamide. The protein operates within purine metabolism; IMP biosynthesis via de novo pathway; 5-formamido-1-(5-phospho-D-ribosyl)imidazole-4-carboxamide from 5-amino-1-(5-phospho-D-ribosyl)imidazole-4-carboxamide (10-formyl THF route): step 1/1. It functions in the pathway purine metabolism; IMP biosynthesis via de novo pathway; IMP from 5-formamido-1-(5-phospho-D-ribosyl)imidazole-4-carboxamide: step 1/1. The polypeptide is Bifunctional purine biosynthesis protein PurH (Anaeromyxobacter sp. (strain K)).